A 722-amino-acid chain; its full sequence is Catalase B (722 aa).

Residues 1–15 (MRALGLVGLVGVANA) form the signal peptide. Residues His100 and Asn173 contribute to the active site. Tyr388 contributes to the heme binding site.

Belongs to the catalase family. Heme is required as a cofactor.

The protein localises to the secreted. The enzyme catalyses 2 H2O2 = O2 + 2 H2O. Its function is as follows. Occurs in almost all aerobically respiring organisms and serves to protect cells from the toxic effects of hydrogen peroxide. This chain is Catalase B (catB), found in Emericella nidulans (strain FGSC A4 / ATCC 38163 / CBS 112.46 / NRRL 194 / M139) (Aspergillus nidulans).